The chain runs to 323 residues: MAPTHVLRCCQRGLAWIPVIFIALVVCWSYYAYVVELCLLVYLVVFHLSFVMFVWSYWKTIFTKPANPSKEFCLPKSEKEQYEKEQRPETQQEILKKVATSLPLYTRTGAGAIRYCDRCQVIKPDRCHHCSACDMCVLKMDHHCPWVNNCVGFSNYKFFILFLTYSLVYCLFIAASVLQYFIKFWTSDLPESHAKFHVLFLFFVAAMFCISILSLFTYHLWLVGKNRSTIEAFRAPVFRNGPDKNGFSLGFSKNIAQVFGDEKKYWLLPVFTSQGDGLSFPTRLVTIDPEQPTECLQPGGAISSLIIVEYCFCKQAKKKKTDE.

Over 1 to 14 the chain is Cytoplasmic; sequence MAPTHVLRCCQRGL. The helical transmembrane segment at 15-35 threads the bilayer; sequence AWIPVIFIALVVCWSYYAYVV. Over 36–41 the chain is Lumenal; the sequence is ELCLLV. A helical membrane pass occupies residues 42-62; that stretch reads YLVVFHLSFVMFVWSYWKTIF. The Cytoplasmic segment spans residues 63–157; it reads TKPANPSKEF…NNCVGFSNYK (95 aa). The 51-residue stretch at 114 to 164 folds into the DHHC domain; that stretch reads RYCDRCQVIKPDRCHHCSACDMCVLKMDHHCPWVNNCVGFSNYKFFILFLT. The active-site S-palmitoyl cysteine intermediate is the cysteine 144. Residues 158 to 178 traverse the membrane as a helical segment; the sequence is FFILFLTYSLVYCLFIAASVL. Over 179–195 the chain is Lumenal; the sequence is QYFIKFWTSDLPESHAK. The helical transmembrane segment at 196–219 threads the bilayer; sequence FHVLFLFFVAAMFCISILSLFTYH. Over 220–323 the chain is Cytoplasmic; it reads LWLVGKNRST…KQAKKKKTDE (104 aa).

The protein belongs to the DHHC palmitoyltransferase family.

It localises to the golgi apparatus membrane. The protein localises to the cell membrane. Its subcellular location is the cytoplasm. It is found in the perinuclear region. The protein resides in the endoplasmic reticulum membrane. It localises to the endoplasmic reticulum-Golgi intermediate compartment membrane. The enzyme catalyses L-cysteinyl-[protein] + hexadecanoyl-CoA = S-hexadecanoyl-L-cysteinyl-[protein] + CoA. It carries out the reaction L-cysteinyl-[protein] + tetradecanoyl-CoA = S-tetradecanoyl-L-cysteinyl-[protein] + CoA. The catalysed reaction is L-cysteinyl-[protein] + octadecanoyl-CoA = S-octadecanoyl-L-cysteinyl-[protein] + CoA. Palmitoyltransferase that could catalyze the addition of palmitate onto various protein substrates. Catalyzes palmitoylation of Cys residues on protein substrates and has a preference for acyl-CoA with C16 fatty acid chains but may also utilize acyl-CoA with C14 and C18 fatty acid chains. This chain is Palmitoyltransferase ZDHHC20-B (zdhhc20b), found in Danio rerio (Zebrafish).